We begin with the raw amino-acid sequence, 503 residues long: ATP synthase subunit alpha (503 aa).

170–177 lines the ATP pocket; sequence GDRQTGKT.

It belongs to the ATPase alpha/beta chains family. As to quaternary structure, F-type ATPases have 2 components, CF(1) - the catalytic core - and CF(0) - the membrane proton channel. CF(1) has five subunits: alpha(3), beta(3), gamma(1), delta(1), epsilon(1). CF(0) has three main subunits: a(1), b(2) and c(9-12). The alpha and beta chains form an alternating ring which encloses part of the gamma chain. CF(1) is attached to CF(0) by a central stalk formed by the gamma and epsilon chains, while a peripheral stalk is formed by the delta and b chains.

Its subcellular location is the cell inner membrane. It carries out the reaction ATP + H2O + 4 H(+)(in) = ADP + phosphate + 5 H(+)(out). Functionally, produces ATP from ADP in the presence of a proton gradient across the membrane. The alpha chain is a regulatory subunit. In Geobacter metallireducens (strain ATCC 53774 / DSM 7210 / GS-15), this protein is ATP synthase subunit alpha.